The chain runs to 205 residues: MNIIKQPLRVGVGGPVGSGKTALLEALCKSMRDTWQLAVVTNDIYTREDQRILTEAGALEAERIVGVETGGCPHTAIREDASMNLAAVEALSEKFGNLELIFVESGGDNLSATFSPELADLTIYVIDVAEGEKIPRKGGPGITKSDFLVINKTDLAPYVGASLEVMERDTLRMRGERPWGFTNLKSGEGLQNIIAFIEEQGMLGK.

14 to 21 (GPVGSGKT) serves as a coordination point for GTP.

It belongs to the SIMIBI class G3E GTPase family. UreG subfamily. In terms of assembly, homodimer. UreD, UreF and UreG form a complex that acts as a GTP-hydrolysis-dependent molecular chaperone, activating the urease apoprotein by helping to assemble the nickel containing metallocenter of UreC. The UreE protein probably delivers the nickel.

Its subcellular location is the cytoplasm. In terms of biological role, facilitates the functional incorporation of the urease nickel metallocenter. This process requires GTP hydrolysis, probably effectuated by UreG. The protein is Urease accessory protein UreG of Escherichia coli O157:H7.